A 419-amino-acid chain; its full sequence is Serine hydroxymethyltransferase (419 aa).

(6S)-5,6,7,8-tetrahydrofolate-binding positions include Leu-121 and 125–127 (GHL). Residue Lys-230 is modified to N6-(pyridoxal phosphate)lysine. 354–356 (SPF) contacts (6S)-5,6,7,8-tetrahydrofolate.

Belongs to the SHMT family. Homodimer. It depends on pyridoxal 5'-phosphate as a cofactor.

The protein localises to the cytoplasm. It catalyses the reaction (6R)-5,10-methylene-5,6,7,8-tetrahydrofolate + glycine + H2O = (6S)-5,6,7,8-tetrahydrofolate + L-serine. The protein operates within one-carbon metabolism; tetrahydrofolate interconversion. It participates in amino-acid biosynthesis; glycine biosynthesis; glycine from L-serine: step 1/1. Catalyzes the reversible interconversion of serine and glycine with tetrahydrofolate (THF) serving as the one-carbon carrier. This reaction serves as the major source of one-carbon groups required for the biosynthesis of purines, thymidylate, methionine, and other important biomolecules. Also exhibits THF-independent aldolase activity toward beta-hydroxyamino acids, producing glycine and aldehydes, via a retro-aldol mechanism. The sequence is that of Serine hydroxymethyltransferase from Prochlorococcus marinus (strain SARG / CCMP1375 / SS120).